The primary structure comprises 462 residues: MDDLEAVLSRVRDRAVPEPAERDRLRTVAVELADRTREAIADLPVDADVVQVGSTARDTWVSGDRDIDLFVRFDAALDREQLEEYGLAVGHAVLPDGHEEYAEHPYVKGTYEGFDVDLVPCHDVETAGDLISAVDRTPFHDAYLSARLDEGLADDVVLAKAFLKGIGAYGSDLRTEGFSGYLTELLVLELGGFVPLVESARSWHPPVEFDPEGHAERTFDDPLVVVDPTDPTRNVAAVLSAENLARFQHYARELLAAPSEAPFEPVDPAPLDPTDVRDHLDRRETTPVAVVFDAPDLVDDQLWPQLRRSLDGIVRGLNDRGFDVLRARAMTDGSGPEADGDGAKRAALYAELEVAERPAVTRHEGPPVAVRKHAASFYESYADDVDPETYGPFIDGDRYVVEREREFTTVREYLESDAAGDVALGAQVEREFAERDVLVGDAVATLAPAFGVPLREFYEPHP.

Ser-54 and Arg-57 together coordinate ATP. Ser-54 and Arg-57 together coordinate CTP. Mg(2+) contacts are provided by Asp-66, Asp-68, and Asp-117. Positions 140, 160, and 169 each coordinate ATP. His-140, Lys-160, and Tyr-169 together coordinate CTP.

Belongs to the tRNA nucleotidyltransferase/poly(A) polymerase family. Archaeal CCA-adding enzyme subfamily. Homodimer. Mg(2+) is required as a cofactor.

The catalysed reaction is a tRNA precursor + 2 CTP + ATP = a tRNA with a 3' CCA end + 3 diphosphate. The enzyme catalyses a tRNA with a 3' CCA end + 2 CTP + ATP = a tRNA with a 3' CCACCA end + 3 diphosphate. Functionally, catalyzes the addition and repair of the essential 3'-terminal CCA sequence in tRNAs without using a nucleic acid template. Adds these three nucleotides in the order of C, C, and A to the tRNA nucleotide-73, using CTP and ATP as substrates and producing inorganic pyrophosphate. tRNA 3'-terminal CCA addition is required both for tRNA processing and repair. Also involved in tRNA surveillance by mediating tandem CCA addition to generate a CCACCA at the 3' terminus of unstable tRNAs. While stable tRNAs receive only 3'-terminal CCA, unstable tRNAs are marked with CCACCA and rapidly degraded. The sequence is that of CCA-adding enzyme from Halorubrum lacusprofundi (strain ATCC 49239 / DSM 5036 / JCM 8891 / ACAM 34).